The following is a 272-amino-acid chain: DNA repair protein RecO (272 aa).

This sequence belongs to the RecO family.

In terms of biological role, involved in DNA repair and RecF pathway recombination. The sequence is that of DNA repair protein RecO from Latilactobacillus sakei subsp. sakei (strain 23K) (Lactobacillus sakei subsp. sakei).